The following is a 292-amino-acid chain: Undecaprenyl-diphosphatase (292 aa).

Helical transmembrane passes span 87-107 (MGWYVIIGSIPIGVAGLLFEE), 113-133 (FRDLRLTALTLIVFGVLLGMV), 190-210 (AFLLAMPAVFASGLYKLKDIG), 219-239 (ATIVGTLVAFAVGYAVIAWFM), and 250-270 (FVYYRIALGILILALVSFGVL).

It belongs to the UppP family.

It localises to the cell membrane. It catalyses the reaction di-trans,octa-cis-undecaprenyl diphosphate + H2O = di-trans,octa-cis-undecaprenyl phosphate + phosphate + H(+). Its function is as follows. Catalyzes the dephosphorylation of undecaprenyl diphosphate (UPP). Confers resistance to bacitracin. This is Undecaprenyl-diphosphatase from Thermobifida fusca (strain YX).